The following is a 716-amino-acid chain: Mitogen-activated protein kinase kinase kinase 5 (716 aa).

Low complexity predominate over residues 1-27 (MRWLPQISFSSPSSSPSSSLKPVASYS). Disordered stretches follow at residues 1–42 (MRWL…DRFH), 74–98 (ASTSSSTFDSGLTRSPSAFTAVPRS), 119–180 (AANA…YWVN), and 238–302 (YDIT…VTNG). Positions 31 to 40 (DPDRNQDRDR) are enriched in basic and acidic residues. The span at 75–91 (STSSSTFDSGLTRSPSA) shows a compositional bias: polar residues. The span at 124 to 137 (GLDDRDRDPERLIS) shows a compositional bias: basic and acidic residues. 3 stretches are compositionally biased toward polar residues: residues 138–150 (DRTSSGPPLTSVN), 162–173 (ENSSYQDFSPRN), and 242–251 (AFSTDNSPIH). Residues 263–273 (RSPQPSRPSSP) are compositionally biased toward low complexity. The Protein kinase domain occupies 346–607 (WKKGKLIGRG…ASMLLEHRFL (262 aa)). ATP contacts are provided by residues 352–360 (IGRGTFGSV) and lysine 375. The Proton acceptor role is filled by aspartate 472. A compositionally biased stretch (polar residues) spans 610 to 633 (SLQPTSPSNSDVSQLFNGMNITEP). A disordered region spans residues 610–716 (SLQPTSPSNS…RRTGVTSDHL (107 aa)). Phosphoserine; by PBL27 occurs at positions 617 and 622. Positions 634-648 (SSRREKPNFKLDQVP) are enriched in basic and acidic residues. 2 stretches are compositionally biased toward polar residues: residues 652–661 (NMTSSESESG) and 674–685 (LTGTVNRLSPRS). 2 positions are modified to phosphoserine; by PBL27: serine 658 and serine 660. The residue at position 677 (threonine 677) is a Phosphothreonine; by PBL27. The residue at position 685 (serine 685) is a Phosphoserine; by PBL27. Basic and acidic residues predominate over residues 703-716 (SSDRRRTGVTSDHL).

The protein belongs to the protein kinase superfamily. STE Ser/Thr protein kinase family. MAP kinase kinase kinase subfamily. As to quaternary structure, interacts with PBL27 at the plasma membrane; disassociation is induced by chitin perception by the CERK1 complex. Interacts with MKK2, MKK4, and MKK5 mainly in the cytosol. Post-translationally, phosphorylated by PBL27 during chitin-mediated signaling in a CERK1-dependent manner. As to expression, mostly expressed in flower buds. Also present in pollen, roots, leaves and seedlings, and, at low levels, in stems and immature siliques.

Its subcellular location is the cell membrane. The protein localises to the cytoplasm. It localises to the cytosol. It catalyses the reaction L-seryl-[protein] + ATP = O-phospho-L-seryl-[protein] + ADP + H(+). The catalysed reaction is L-threonyl-[protein] + ATP = O-phospho-L-threonyl-[protein] + ADP + H(+). Its function is as follows. Mitogen-activated protein kinase (MAPK) involved in the transduction of signal between the host cell surface chitin receptor complex CERK1-LYK5 and the intracellular MAPK cascade that leads to chitin-induced immunity. Phosphorylates and activates MAPK targets (e.g. MKK4, MKK5, and possibly MKK2) when phosphorylated by PBL27 after elicitation by chitin. Required for resistance to the fungus A.brassicicola. This Arabidopsis thaliana (Mouse-ear cress) protein is Mitogen-activated protein kinase kinase kinase 5.